The chain runs to 156 residues: Putative increased recombination centers protein 11 (156 aa).

A helical transmembrane segment spans residues alanine 20–histidine 42.

It localises to the membrane. The chain is Putative increased recombination centers protein 11 (IRC11) from Saccharomyces cerevisiae (strain ATCC 204508 / S288c) (Baker's yeast).